A 291-amino-acid chain; its full sequence is Undecaprenyl-diphosphatase (291 aa).

The next 8 helical transmembrane spans lie at 1-21 (MIII…LTEF), 48-68 (SAFT…AWVF), 100-120 (LHVL…DDFI), 124-144 (LFSV…MIIA), 160-180 (INYV…WPGF), 201-221 (SDFT…LSLV), 230-250 (AHIP…LIAI), and 270-290 (IVLV…QGIS).

This sequence belongs to the UppP family.

The protein localises to the cell membrane. The catalysed reaction is di-trans,octa-cis-undecaprenyl diphosphate + H2O = di-trans,octa-cis-undecaprenyl phosphate + phosphate + H(+). Functionally, catalyzes the dephosphorylation of undecaprenyl diphosphate (UPP). Confers resistance to bacitracin. In Staphylococcus haemolyticus (strain JCSC1435), this protein is Undecaprenyl-diphosphatase.